Here is a 73-residue protein sequence, read N- to C-terminus: Carboxysome shell vertex protein CsoS4B (73 aa).

Residues 1–68 (MVCTQRVAGL…TDLTIGGIID (68 aa)) enclose the BMV domain.

This sequence belongs to the CcmL/EutN family. CsoS4 subfamily. In terms of assembly, homopentamer.

The protein localises to the carboxysome. Functionally, probably forms vertices in the carboxysome, a polyhedral inclusion where RuBisCO (ribulose bisphosphate carboxylase, cbbL-cbbS) is sequestered. Has been modeled to induce curvature upon insertion into an otherwise flat hexagonal layer of major carboxysome subunits. Has not been identified in purified carboxysomes; it is expected to be present in very low amounts. The chain is Carboxysome shell vertex protein CsoS4B from Prochlorococcus marinus subsp. pastoris (strain CCMP1986 / NIES-2087 / MED4).